A 118-amino-acid polypeptide reads, in one-letter code: Cell division protein FtsB (118 aa).

At 1–3 the chain is on the cytoplasmic side; the sequence is MRL. Residues 4-21 traverse the membrane as a helical segment; the sequence is LFLVLLVLLGLIQYPLWL. Over 22-118 the chain is Periplasmic; sequence GKGGWFKVWD…PRPPATPPRR (97 aa). Positions 28-62 form a coiled coil; that stretch reads KVWDLQRQVAEQRETNDGLRARNTALEAEVRDLAT. Residues 88–118 form a disordered region; it reads LPPGTPLPSGNSTPQASALSKPRPPATPPRR. Over residues 95-105 the composition is skewed to polar residues; the sequence is PSGNSTPQASA. Residues 109–118 are compositionally biased toward pro residues; it reads PRPPATPPRR.

It belongs to the FtsB family. As to quaternary structure, part of a complex composed of FtsB, FtsL and FtsQ.

Its subcellular location is the cell inner membrane. Its function is as follows. Essential cell division protein. May link together the upstream cell division proteins, which are predominantly cytoplasmic, with the downstream cell division proteins, which are predominantly periplasmic. The protein is Cell division protein FtsB of Bordetella parapertussis (strain 12822 / ATCC BAA-587 / NCTC 13253).